We begin with the raw amino-acid sequence, 265 residues long: Glutamate racemase (265 aa).

Residues 7–8 (DS) and 39–40 (YG) each bind substrate. Cysteine 70 serves as the catalytic Proton donor/acceptor. A substrate-binding site is contributed by 71–72 (NT). Cysteine 177 (proton donor/acceptor) is an active-site residue.

This sequence belongs to the aspartate/glutamate racemases family.

It catalyses the reaction L-glutamate = D-glutamate. It functions in the pathway cell wall biogenesis; peptidoglycan biosynthesis. Provides the (R)-glutamate required for cell wall biosynthesis. This chain is Glutamate racemase, found in Prochlorococcus marinus (strain NATL2A).